The chain runs to 158 residues: UPF0266 membrane protein YobD (158 aa).

3 helical membrane passes run 6-26 (LVLILFIAALLAFAIYDQFIM), 45-65 (IDSVIFVGLIVILIYNNVTNH), and 67-87 (ALITTWLLSALALMGFYIFWI).

The protein belongs to the UPF0266 family.

The protein localises to the cell inner membrane. This chain is UPF0266 membrane protein YobD, found in Shigella boydii serotype 4 (strain Sb227).